Here is a 73-residue protein sequence, read N- to C-terminus: MAKTITISEEAYKLLLKEKRDGESFSDVIVRLIKGNRREVMDYAGIWSDMNDEESNKLFKDLEKMWERWNVNA.

It belongs to the UPF0330 family.

In terms of biological role, possibly the antitoxin component of a type II toxin-antitoxin (TA) system. The polypeptide is Putative antitoxin M1627_0365 (Saccharolobus islandicus (strain M.16.27) (Sulfolobus islandicus)).